An 88-amino-acid polypeptide reads, in one-letter code: Small ribosomal subunit protein uS17 (88 aa).

Belongs to the universal ribosomal protein uS17 family. In terms of assembly, part of the 30S ribosomal subunit.

Functionally, one of the primary rRNA binding proteins, it binds specifically to the 5'-end of 16S ribosomal RNA. The sequence is that of Small ribosomal subunit protein uS17 from Helicobacter hepaticus (strain ATCC 51449 / 3B1).